The following is a 1070-amino-acid chain: Alpha-glucosidase (1070 aa).

Positions 1 to 35 (MRSIKAASLTPLLAALFTTLSSTLALPSSVWEHQL) are cleaved as a signal peptide. N-linked (GlcNAc...) asparagine glycosylation is found at Asn48, Asn99, Asn144, Asn161, Asn208, Asn384, Asn458, Asn480, and Asn513. The active-site Nucleophile is the Asp526. Glu529 is a catalytic residue. Asn544, Asn566, Asn574, Asn578, and Asn635 each carry an N-linked (GlcNAc...) asparagine glycan. The active-site Proton donor is Asp730. N-linked (GlcNAc...) asparagine glycosylation is found at Asn818, Asn885, Asn916, Asn983, Asn992, Asn996, Asn1008, Asn1029, Asn1043, and Asn1052.

Belongs to the glycosyl hydrolase 31 family.

It carries out the reaction Hydrolysis of terminal, non-reducing (1-&gt;4)-linked alpha-D-glucose residues with release of alpha-D-glucose.. Hydrolyzes a broad range of alpha-D-linked glucopyranosides, including maltose (alpha-1,4), sucrose (alpha-1,2), isomaltose (alpha-1,6) and turanose (alpha-1,3). This Candida tsukubaensis (Yeast) protein is Alpha-glucosidase.